A 76-amino-acid chain; its full sequence is Large ribosomal subunit protein eL20 (76 aa).

This sequence belongs to the eukaryotic ribosomal protein eL20 family. Part of the 50S ribosomal subunit. Binds 23S rRNA.

The chain is Large ribosomal subunit protein eL20 from Methanococcus maripaludis (strain DSM 14266 / JCM 13030 / NBRC 101832 / S2 / LL).